We begin with the raw amino-acid sequence, 297 residues long: Pantothenate synthetase (297 aa).

30–37 lines the ATP pocket; sequence MGYLHAGH. The Proton donor role is filled by His37. Residue Gln61 participates in (R)-pantoate binding. Residue Gln61 participates in beta-alanine binding. 147 to 150 serves as a coordination point for ATP; sequence GEKD. Position 153 (Gln153) interacts with (R)-pantoate. ATP-binding positions include Val176 and 184–187; that span reads LSSR.

This sequence belongs to the pantothenate synthetase family. As to quaternary structure, homodimer.

The protein resides in the cytoplasm. It catalyses the reaction (R)-pantoate + beta-alanine + ATP = (R)-pantothenate + AMP + diphosphate + H(+). It functions in the pathway cofactor biosynthesis; (R)-pantothenate biosynthesis; (R)-pantothenate from (R)-pantoate and beta-alanine: step 1/1. In terms of biological role, catalyzes the condensation of pantoate with beta-alanine in an ATP-dependent reaction via a pantoyl-adenylate intermediate. The chain is Pantothenate synthetase from Rhizobium etli (strain ATCC 51251 / DSM 11541 / JCM 21823 / NBRC 15573 / CFN 42).